A 347-amino-acid polypeptide reads, in one-letter code: 4-hydroxy-2-oxovalerate aldolase 1 (347 aa).

One can recognise a Pyruvate carboxyltransferase domain in the interval I13–A265. R21–D22 serves as a coordination point for substrate. D22 contributes to the Mn(2+) binding site. The active-site Proton acceptor is the H25. S175 and H204 together coordinate substrate. Mn(2+) contacts are provided by H204 and H206. Residue Y295 coordinates substrate.

This sequence belongs to the 4-hydroxy-2-oxovalerate aldolase family.

The catalysed reaction is (S)-4-hydroxy-2-oxopentanoate = acetaldehyde + pyruvate. This chain is 4-hydroxy-2-oxovalerate aldolase 1, found in Rhodococcus erythropolis (strain PR4 / NBRC 100887).